Reading from the N-terminus, the 950-residue chain is Protocadherin alpha-8 (950 aa).

An N-terminal signal peptide occupies residues 1 to 29 (MVYHWRGDLGSWRLLLLLLLLAAWKVGSG). Cadherin domains are found at residues 30-133 (QLHY…PPVF), 157-242 (ASDA…APNF), 243-350 (EQSE…VPEI), 351-455 (ALTS…APAF), 456-565 (AQPE…APAL), and 581-678 (VPRS…APKA). The Extracellular segment spans residues 30 to 697 (QLHYSVPEEA…GPEAALVDVN (668 aa)). N-linked (GlcNAc...) asparagine glycans are attached at residues Asn257 and Asn265. Residue Asn548 is glycosylated (N-linked (GlcNAc...) asparagine). Residues 698-718 (VYLIIAICAVSSLLVLTLLLY) form a helical membrane-spanning segment. Residues 719-950 (TALRCSALPT…GNSTTDNSDQ (232 aa)) lie on the Cytoplasmic side of the membrane. PXXP repeat units lie at residues 774–777 (PCLP), 799–802 (PRQP), 832–835 (PGGP), 873–876 (PGNP), and 891–894 (PGSP). The tract at residues 774–894 (PCLPPDLGSV…PDKFIIPGSP (121 aa)) is 5 X 4 AA repeats of P-X-X-P. Residues 831–950 (GPGGPDQQWP…GNSTTDNSDQ (120 aa)) form a disordered region. Residues 909 to 923 (DKSDFITFGKKEETK) show a composition bias toward basic and acidic residues.

It is found in the cell membrane. Its function is as follows. Potential calcium-dependent cell-adhesion protein. May be involved in the establishment and maintenance of specific neuronal connections in the brain. In Pan troglodytes (Chimpanzee), this protein is Protocadherin alpha-8 (PCDHA8).